The primary structure comprises 334 residues: N-acetyl-gamma-glutamyl-phosphate reductase (334 aa).

C154 is an active-site residue.

Belongs to the NAGSA dehydrogenase family. Type 1 subfamily.

It is found in the cytoplasm. The catalysed reaction is N-acetyl-L-glutamate 5-semialdehyde + phosphate + NADP(+) = N-acetyl-L-glutamyl 5-phosphate + NADPH + H(+). Its pathway is amino-acid biosynthesis; L-arginine biosynthesis; N(2)-acetyl-L-ornithine from L-glutamate: step 3/4. Its function is as follows. Catalyzes the NADPH-dependent reduction of N-acetyl-5-glutamyl phosphate to yield N-acetyl-L-glutamate 5-semialdehyde. The polypeptide is N-acetyl-gamma-glutamyl-phosphate reductase (Yersinia pseudotuberculosis serotype I (strain IP32953)).